The following is a 455-amino-acid chain: T-box protein VegT (455 aa).

The T-box DNA-binding region spans 57–230; the sequence is LWAQFHQEGT…HNPFAKGFRE (174 aa). A compositionally biased stretch (basic and acidic residues) spans 229–241; that stretch reads REQERSHKRDDVL. 2 disordered regions span residues 229–276 and 295–360; these read REQE…RVKE and ANQG…PDSD. Residues 308 to 326 are compositionally biased toward polar residues; the sequence is GANQEQQVPSSSSNFYNRN.

As to quaternary structure, forms a repression complex on the promoters of the nodal/nr1 and siamois genes with the maternal factors tcf7l1/tcf3 and pouf5.1/oct-25. Interacts (via C-terminus) with tcf7l1/tcf3 (via N-terminus). Also interacts with the other POU-domain transcription factors pou5f1.2/oct-91 and pou5f1.3/oct-60. In terms of tissue distribution, vegetally localized in oocytes and expressed in the presumptive endoderm and mesoderm at early gastrula stage. Expression is down-regulated in the endoderm by the end of gastrulation but maintained in the lateral and ventral mesoderm of the blastopore lip.

Its subcellular location is the nucleus. Transcription factor required for both mesoderm and endoderm formation in the embryo; signaling determinants and concentration levels may determine which germ layer is formed. Acts together with beta-catenin to activate genes that are responsible for mesoderm induction including wnt-8, eomes t/bra, siamois, mix1 and sox17. Directly binds to promoter DNA. Patterns the mesoderm along the dorsoventral and posterior axis. Activates siamois gene transcription when alone or in combination with beta-catenin, but inhibits siamois transcription in combination with pou5f1.1/oct-25. This Xenopus tropicalis (Western clawed frog) protein is T-box protein VegT.